We begin with the raw amino-acid sequence, 479 residues long: 3-phytase B (479 aa).

Residues 1-19 (MPRTSLLTLACALATGASA) form the signal peptide. The Nucleophile role is filled by histidine 82. Asparagine 106, asparagine 191, asparagine 227, asparagine 250, and asparagine 315 each carry an N-linked (GlcNAc...) asparagine glycan. Aspartate 338 functions as the Proton donor in the catalytic mechanism. N-linked (GlcNAc...) asparagine glycosylation is found at asparagine 425, asparagine 442, and asparagine 458.

It belongs to the histidine acid phosphatase family.

It catalyses the reaction 1D-myo-inositol hexakisphosphate + H2O = 1D-myo-inositol 1,2,4,5,6-pentakisphosphate + phosphate. Functionally, catalyzes the hydrolysis of inorganic orthophosphate from phytate. In Aspergillus niger, this protein is 3-phytase B (phyB).